The following is a 465-amino-acid chain: Protein maelstrom (465 aa).

The HMG box DNA-binding region spans 2–69; sequence APKKHSGFMM…ADRGKRERLN (68 aa). Positions 415–440 are disordered; it reads MRKSSKHTGPSVSTQRERNAGAWNLP.

It belongs to the maelstrom family.

Its subcellular location is the cytoplasm. It localises to the nucleus. Its function is as follows. Involved both in the piRNA and miRNA metabolic processes. As a component of the meiotic nuage, plays a central role during oogenesis by repressing transposable elements and preventing their mobilization, which is essential for the germline integrity. Repression of transposable elements is mediated via the piRNA metabolic process, which mediates the repression of transposable elements during meiosis by forming complexes composed of piRNAs and Piwi proteins and governs the repression of transposons. As a nuclear component, it is required for proper differentiation in the germline stem cell (GSC) lineage by repressing microRNA-7 (miR-7), thereby acting as an indirect regulator of bag-of-marbles (Bam). Acts by binding to the promoter of miR-7 gene and repressing its expression; miR-7 repression alleviates the Bam repression by miR-7, thereby allowing differentiation in the germline stem cell (GSC) lineage. This Drosophila yakuba (Fruit fly) protein is Protein maelstrom (mael).